The sequence spans 58 residues: Large ribosomal subunit protein eL24 (58 aa).

Residues Cys6, Cys9, Cys32, and Cys36 each coordinate Zn(2+). The C4-type zinc finger occupies 6–36 (CAFCGADILPGYGIMYVKTDGTTLRFCSRKC).

Belongs to the eukaryotic ribosomal protein eL24 family. Part of the 50S ribosomal subunit. Forms a cluster with proteins L3 and L14. Requires Zn(2+) as cofactor.

Its function is as follows. Binds to the 23S rRNA. The protein is Large ribosomal subunit protein eL24 of Pyrobaculum islandicum (strain DSM 4184 / JCM 9189 / GEO3).